A 229-amino-acid chain; its full sequence is Large ribosomal subunit protein bL19cy (229 aa).

Residues 1 to 70 constitute a chloroplast transit peptide; the sequence is MATSSHLLPQ…DSKKRKEFIA (70 aa).

This sequence belongs to the bacterial ribosomal protein bL19 family. As to quaternary structure, part of the 50S ribosomal subunit.

The protein localises to the plastid. Its subcellular location is the chloroplast. Located at the 30S-50S ribosomal subunit interface and binds directly to 23S ribosomal RNA. The chain is Large ribosomal subunit protein bL19cy from Arabidopsis thaliana (Mouse-ear cress).